Consider the following 71-residue polypeptide: Brevinin-1SN1 (71 aa).

An N-terminal signal peptide occupies residues 1-22 (MFTMKKPLLLLFFLGTINLSLC). Residues 23-45 (EEERNADEEEKRDGDDEMDAEVE) constitute a propeptide, removed in mature form. C65 and C71 are disulfide-bonded.

Belongs to the frog skin active peptide (FSAP) family. Brevinin subfamily. In terms of tissue distribution, expressed by the skin glands.

It is found in the secreted. Antimicrobial peptide. Active against some Gram-negative and a variety of Gram-positive bacterial strains. Active against fungus C.glabrata 090902 but not against C.albicans ATCC 10231. Shows hemolytic activity against human erythrocytes. This chain is Brevinin-1SN1, found in Sylvirana spinulosa (Fine-spined frog).